Consider the following 474-residue polypeptide: PTS system N-acetylmuramic acid-specific EIIBC component (474 aa).

One can recognise a PTS EIIB type-1 domain in the interval 1–89; the sequence is MAKEISSELL…SELLGDAPVQ (89 aa). The Cytoplasmic portion of the chain corresponds to 1–123; sequence MAKEISSELL…LAKFATIFTP (123 aa). Cys29 acts as the Phosphocysteine intermediate; for EIIB activity in catalysis. The 360-residue stretch at 115–474 folds into the PTS EIIC type-1 domain; that stretch reads AKFATIFTPL…LFGCRNVNLD (360 aa). The helical transmembrane segment at 124–144 threads the bilayer; sequence LIPGFIAAGLLLGIATLIATV. Over 145–157 the chain is Periplasmic; it reads MHVPADAQGTLPD. A helical membrane pass occupies residues 158–178; that stretch reads ALNFMKVFSKGLFTFLVILVG. Residues 179–180 lie on the Cytoplasmic side of the membrane; it reads YN. A helical transmembrane segment spans residues 181-201; the sequence is AAQAFGGTGVNGAIIAALFLL. At 202 to 217 the chain is on the periplasmic side; that stretch reads GYNPAATTGYYAGFHD. The helical transmembrane segment at 218–238 threads the bilayer; sequence FFGLPIDPRGNIIGVLIAAWA. Residues 239-260 are Cytoplasmic-facing; that stretch reads CARIEGMVRRFMPDDLDMLLTS. A helical transmembrane segment spans residues 261-281; the sequence is LITLLITATLAYLIIMPLGGW. Residues 282 to 301 are Periplasmic-facing; sequence LFEGMSWLFMHLNSNPFGCA. A helical transmembrane segment spans residues 302–322; it reads VLAGLFLIAVVFGVHQGFIPV. Topologically, residues 323–334 are cytoplasmic; sequence YLALMDSQGFNS. The chain crosses the membrane as a helical span at residues 335–355; sequence LFPILSMAGAGQVGAALALYW. Residues 356-368 are Periplasmic-facing; that stretch reads RAQPHSALRSQVR. A helical membrane pass occupies residues 369–389; the sequence is GAIIPGLLGVGEPLIYGVTLP. Residues 390-393 lie on the Cytoplasmic side of the membrane; the sequence is RMKP. Residues 394–414 traverse the membrane as a helical segment; that stretch reads FVTACLGGAAGGLFIGLIAWW. Topologically, residues 415 to 440 are periplasmic; that stretch reads GLPMGLNSAFGPSGLVALPLMTSAQG. Residues 441-461 form a helical membrane-spanning segment; it reads ILPAMAVYAGGILVAWVCGFI. At 462-474 the chain is on the cytoplasmic side; the sequence is FTTLFGCRNVNLD.

The protein resides in the cell inner membrane. The catalysed reaction is N-acetyl-beta-D-muramate(out) + N(pros)-phospho-L-histidyl-[protein] = N-acetyl-beta-D-muramate 6-phosphate(in) + L-histidyl-[protein]. The phosphoenolpyruvate-dependent sugar phosphotransferase system (sugar PTS), a major carbohydrate active transport system, catalyzes the phosphorylation of incoming sugar substrates concomitantly with their translocation across the cell membrane. This system is involved in N-acetylmuramic acid (MurNAc) transport, yielding cytoplasmic MurNAc-6-P. Is also able to take up anhydro-N-acetylmuramic acid (anhMurNAc), but cannot phosphorylate the carbon 6, probably because of the 1,6-anhydro ring. The protein is PTS system N-acetylmuramic acid-specific EIIBC component (murP) of Shigella flexneri.